The following is a 295-amino-acid chain: tRNA-cytidine(32) 2-sulfurtransferase (295 aa).

Positions 59-64 (SGGKDS) match the PP-loop motif motif. [4Fe-4S] cluster contacts are provided by Cys-134, Cys-137, and Cys-225.

It belongs to the TtcA family. As to quaternary structure, homodimer. Mg(2+) serves as cofactor. It depends on [4Fe-4S] cluster as a cofactor.

It is found in the cytoplasm. It carries out the reaction cytidine(32) in tRNA + S-sulfanyl-L-cysteinyl-[cysteine desulfurase] + AH2 + ATP = 2-thiocytidine(32) in tRNA + L-cysteinyl-[cysteine desulfurase] + A + AMP + diphosphate + H(+). The protein operates within tRNA modification. In terms of biological role, catalyzes the ATP-dependent 2-thiolation of cytidine in position 32 of tRNA, to form 2-thiocytidine (s(2)C32). The sulfur atoms are provided by the cysteine/cysteine desulfurase (IscS) system. This Ruegeria sp. (strain TM1040) (Silicibacter sp.) protein is tRNA-cytidine(32) 2-sulfurtransferase.